A 460-amino-acid polypeptide reads, in one-letter code: Sexual development regulator velC (460 aa).

Disordered stretches follow at residues 67–131 (VGPD…PQAP), 152–216 (YAPR…RPDP), and 422–460 (KKGN…SARQ). The segment covering 192–207 (PVTTNGRPPDSNSPMV) has biased composition (polar residues). The Velvet domain maps to 239-422 (LSDNRFNLQI…KEQGCIISIK (184 aa)). Residues 423-437 (KGNDRSKNTRSHDDS) are compositionally biased toward basic and acidic residues. Residues 451–460 (GKRRRRSARQ) are compositionally biased toward basic residues.

This sequence belongs to the velvet family. VelC subfamily. Interacts with VE1.

The protein localises to the nucleus. Functionally, velvet-domain-containing protein that acts as a positive regulator of sexual development. Dispensable for regulation of conidial size, hyphal hydrophobicity, fumonisin production, and oxidant resistance. The chain is Sexual development regulator velC from Gibberella moniliformis (strain M3125 / FGSC 7600) (Maize ear and stalk rot fungus).